Reading from the N-terminus, the 233-residue chain is 7-cyano-7-deazaguanine synthase (233 aa).

17-27 (LSGGLDSMVCA) lines the ATP pocket. Zn(2+) contacts are provided by cysteine 196, cysteine 206, cysteine 209, and cysteine 212.

This sequence belongs to the QueC family. It depends on Zn(2+) as a cofactor.

The enzyme catalyses 7-carboxy-7-deazaguanine + NH4(+) + ATP = 7-cyano-7-deazaguanine + ADP + phosphate + H2O + H(+). The protein operates within purine metabolism; 7-cyano-7-deazaguanine biosynthesis. Its function is as follows. Catalyzes the ATP-dependent conversion of 7-carboxy-7-deazaguanine (CDG) to 7-cyano-7-deazaguanine (preQ(0)). This chain is 7-cyano-7-deazaguanine synthase, found in Novosphingobium aromaticivorans (strain ATCC 700278 / DSM 12444 / CCUG 56034 / CIP 105152 / NBRC 16084 / F199).